A 1407-amino-acid polypeptide reads, in one-letter code: MISATSFVTAIGSRPPRYRTPSPPRRAVEPISPCSTADYRTYRASREISASATSDHVRSTPTDKRPSPADVPASHRSGHGRSSSTIDTLATIALATSPTFTPLTHRPPSDKSNTTLSMFPPETEPVERPAKRPRSERDESSYTQHRSNAFSIARPPAISDSMKTDAELLLNFARPTNLYPPIPSSKRANTDDSYHNHTFHTQAQIKERNASTYWVTNHENVIFNHSAMHNIPPSRMRSQSDGSAAISRPVIEGLRPNTSSSTLPPLAFQEEADSGDRHWDMERKPVLEESQVDFCKPDETVPILSQSQPLKKELDADSNGSSQASCATCNLVRIPVDNEDQDVTWISCDGCKRWFHIVCAGFKNDRETRTVDKFICKTCRPIHGQTTFVRKSSRVRTSIDYAGLNQGLVKSATDSLEHHYIEPIKQNKIRFLPENFPRMRPELVTAEYFEKGNGMTEPIVIPAEFNTHATIPPTNPEFDALVQDAPSQEMFDELLDHLPNVDHETVIDCGQNQLDMVIPQGLTVRTVSELYGPEERVEVIDVKSQHGEDKRWTMQKWADYYESTGDKVVRNVISLEVSQSKLGRLIRRPKIVRDLDLQDAVWPEELKAVGNFPKVQFYCLMSVADCYTDFHIDFGGSSVYYHILKGKKTFFFIPPKDKHLKKYEEWCNSPAQDYTFLGDQTKECYRVDLSEGDTMLIPSGWIHAVWTPENSLVIGGNFLTRLNYGMQIKIAKIEKETKVPMKFRYPFFQKIQWYAVLKYLEEDPVPQSVLAAFSQDENYRFHRKYPIYYEFGERANTEPKGSPYHNSRFYSQAELEGLPDLAKYLLRTALIAGSYLVEGVTADTRNAVKRSIPAMPGEPIDVIRTFGVWIAWKRGNEKAAHWTRPGVVESNAKLSLAEKRPAGRPSRRSERNADNQRTYAERQAVQRLSERPAVDIQKDSAPGDESVAPLANNSPPAATSGIPVPVMNEDTSQKHKTASRGSGLGPKRVACDACRKRRIRCHHKEENNGASGSQMTVSTSSLGHHTPTAQDAASALNSLAAIASGAGFQNGLHSIKGMDRMDASANFATSISATPHGVTLKVGDGSPDGLNSAKKGRSKACDDCRKSKRRCIHDEYGRIDPIKAQERSKPRATSLAKRPRVHEEAAPSSANKRLKQESTSPVAQPVHSSHMDTETPTRAQDSVENGVLDQYPRKSNTQHADGLPAEKALLPDQSSYASPPAFQADAVATKELPATVSKPAAVLVSPPTSLADEMDIHDQVDAGGEHVSVIYTPSSGSRQSSRQPRQVERYMPEVHFAKTAKSTTTTPQTTRRSSFGSSGRKTTPGLSSGSKKSGSRPSSSHGKKSLSPSVEKKAERHAISSAPFGQHGRGSKSEHGTSDVDPDAESLRLIREIQEQEFGLRRRAGRA.

Disordered regions lie at residues 1 to 86 (MISA…SSTI) and 98 to 151 (PTFT…NAFS). Basic and acidic residues-rich tracts occupy residues 55-67 (DHVR…KRPS) and 125-140 (PVER…RDES). Polar residues predominate over residues 141–150 (SYTQHRSNAF). A PHD-type zinc finger spans residues 323 to 382 (QASCATCNLVRIPVDNEDQDVTWISCDGCKRWFHIVCAGFKNDRETRTVDKFICKTCRPI). The region spanning 577–735 (VSQSKLGRLI…MQIKIAKIEK (159 aa)) is the JmjC domain. A substrate-binding site is contributed by Thr-628. His-631 and Asp-633 together coordinate Fe cation. Lys-648 lines the substrate pocket. His-703 is a Fe cation binding site. Disordered regions lie at residues 893–987 (KLSL…LGPK), 1004–1027 (KEEN…HHTP), 1122–1183 (IKAQ…QDSV), and 1252–1389 (DEMD…SLRL). 2 stretches are compositionally biased toward basic and acidic residues: residues 896-914 (LAEK…RNAD) and 928-938 (LSERPAVDIQK). Residues 1008–1027 (NGASGSQMTVSTSSLGHHTP) show a composition bias toward polar residues. Residues 1254 to 1264 (MDIHDQVDAGG) show a composition bias toward basic and acidic residues. The span at 1273 to 1284 (PSSGSRQSSRQP) shows a compositional bias: low complexity. Positions 1285 to 1296 (RQVERYMPEVHF) are enriched in basic and acidic residues. A compositionally biased stretch (low complexity) spans 1297–1349 (AKTAKSTTTTPQTTRRSSFGSSGRKTTPGLSSGSKKSGSRPSSSHGKKSLSPS).

The protein belongs to the JHDM1 histone demethylase family. Fe(2+) is required as a cofactor.

It localises to the nucleus. The enzyme catalyses N(6),N(6)-dimethyl-L-lysyl(36)-[histone H3] + 2 2-oxoglutarate + 2 O2 = L-lysyl(36)-[histone H3] + 2 formaldehyde + 2 succinate + 2 CO2. In terms of biological role, histone demethylase that specifically demethylates 'Lys-36' of histone H3, thereby playing a central role in histone code. The chain is JmjC domain-containing histone demethylation protein 1 (jhd1) from Emericella nidulans (strain FGSC A4 / ATCC 38163 / CBS 112.46 / NRRL 194 / M139) (Aspergillus nidulans).